The primary structure comprises 215 residues: UPF0502 protein YceH (215 aa).

N6-acetyllysine is present on Lys80.

It belongs to the UPF0502 family.

The sequence is that of UPF0502 protein YceH from Escherichia fergusonii (strain ATCC 35469 / DSM 13698 / CCUG 18766 / IAM 14443 / JCM 21226 / LMG 7866 / NBRC 102419 / NCTC 12128 / CDC 0568-73).